The following is a 118-amino-acid chain: DNA-binding protein inhibitor ID-3-B (118 aa).

Residues 32 to 84 (SLKGAGIDETMGLLYDMNGCYSKLKELVPGIPQGSKLSQVEILQHVIDYIFDL) form the bHLH domain.

Homodimer. Heterodimer with other HLH proteins. Interacts (via HLH domain) with the bHLH protein hes4/hairy2 (via Orange domain). Interacts with stat3.

It localises to the nucleus. Functionally, transcriptional regulator (lacking a basic DNA binding domain) which negatively regulates the basic helix-loop-helix (bHLH) transcription factors by forming heterodimers and inhibiting their DNA binding and transcriptional activity. Influences cell fate decisions in the embryo by sequestering and blocking the activity of the bHLH transcription factors that control these decisions. Inhibits the binding of myogenic bHLH-containing complexes to E-box DNA, thereby preventing activation of muscle-specific target genes. Also inhibits the activity of neurogenic factor neurod1/neuroD. Plays a role in cell cycle progression and survival of neural crest progenitors; binding to either hes4-B/hairy2b or stat3 blocks the formation of transcription factor complexes and the repressor function of hes4-B/hairy2B, to allow neural crest progenitors to differentiate. May play a role in the regulation of the circadian rhythm. This Xenopus laevis (African clawed frog) protein is DNA-binding protein inhibitor ID-3-B (id3-b).